Consider the following 643-residue polypeptide: Macrolide export ATP-binding/permease protein MacB (643 aa).

The ABC transporter domain occupies 4–242 (IEIKELNRYF…VNNQSKAKSR (239 aa)). ATP is bound at residue 40 to 47 (GQSGSGKS). 4 helical membrane-spanning segments follow: residues 269-289 (LLTM…VALG), 523-543 (IAFI…LVSV), 572-592 (ILIC…IGGI), and 603-623 (VFST…GVIF).

This sequence belongs to the ABC transporter superfamily. Macrolide exporter (TC 3.A.1.122) family. In terms of assembly, homodimer. Part of the tripartite efflux system MacAB-TolC, which is composed of an inner membrane transporter, MacB, a periplasmic membrane fusion protein, MacA, and an outer membrane component, TolC. The complex forms a large protein conduit and can translocate molecules across both the inner and outer membranes. Interacts with MacA.

It is found in the cell inner membrane. Functionally, part of the tripartite efflux system MacAB-TolC. MacB is a non-canonical ABC transporter that contains transmembrane domains (TMD), which form a pore in the inner membrane, and an ATP-binding domain (NBD), which is responsible for energy generation. Confers resistance against macrolides. In Mannheimia succiniciproducens (strain KCTC 0769BP / MBEL55E), this protein is Macrolide export ATP-binding/permease protein MacB.